The following is a 202-amino-acid chain: Large ribosomal subunit protein eL13 (202 aa).

Positions 183-202 (GIREKRAKEKAEAEAEKAKK) are disordered.

The protein belongs to the eukaryotic ribosomal protein eL13 family. As to quaternary structure, component of the large ribosomal subunit. Mature ribosomes consist of a small (40S) and a large (60S) subunit. The 40S subunit contains about 32 different proteins and 1 molecule of RNA (18S). The 60S subunit contains 45 different proteins and 3 molecules of RNA (25S, 5.8S and 5S).

It localises to the cytoplasm. Functionally, component of the ribosome, a large ribonucleoprotein complex responsible for the synthesis of proteins in the cell. The small ribosomal subunit (SSU) binds messenger RNAs (mRNAs) and translates the encoded message by selecting cognate aminoacyl-transfer RNA (tRNA) molecules. The large subunit (LSU) contains the ribosomal catalytic site termed the peptidyl transferase center (PTC), which catalyzes the formation of peptide bonds, thereby polymerizing the amino acids delivered by tRNAs into a polypeptide chain. The nascent polypeptides leave the ribosome through a tunnel in the LSU and interact with protein factors that function in enzymatic processing, targeting, and the membrane insertion of nascent chains at the exit of the ribosomal tunnel. The protein is Large ribosomal subunit protein eL13 of Candida albicans (strain SC5314 / ATCC MYA-2876) (Yeast).